Consider the following 105-residue polypeptide: Plastocyanin (105 aa).

The region spanning 1–105 is the Plastocyanin-like domain; sequence ETYTVKLGSD…GMVGKITVAG (105 aa). Residues His-39, Cys-89, His-92, and Met-97 each coordinate Cu(2+).

Belongs to the plastocyanin family. Requires Cu(2+) as cofactor.

It is found in the cellular thylakoid membrane. In terms of biological role, participates in electron transfer between P700 and the cytochrome b6-f complex in photosystem I. This chain is Plastocyanin (petE), found in Anabaena variabilis.